Consider the following 418-residue polypeptide: Actin-related protein 3B (418 aa).

This sequence belongs to the actin family. ARP3 subfamily. As to quaternary structure, interacts with the Arp2/3 complex composed of ARP2, ARP3, ARPC1B, ARPC1B/p41-ARC, ARPC2/p34-ARC, ARPC3/p21-ARC, ARPC4/p20-ARC and ARPC5/p16-ARC. In terms of tissue distribution, detected in fetal brain. Detected throughout the adult brain, in neurons from gray matter, but not in white matter. Detected in liver, skeletal muscle and pancreas. Detected in lung adenocarcinoma cells with low metastatic potential, but not in lung adenocarcinoma cells with high metastatic potential.

Its subcellular location is the cytoplasm. It localises to the cytoskeleton. The protein localises to the cell projection. Plays a role in the organization of the actin cytoskeleton. May function as ATP-binding component of the Arp2/3 complex which is involved in regulation of actin polymerization and together with an activating nucleation-promoting factor (NPF) mediates the formation of branched actin networks. May decrease the metastatic potential of tumors. The protein is Actin-related protein 3B (ACTR3B) of Homo sapiens (Human).